The chain runs to 203 residues: Thymidine kinase (203 aa).

ATP is bound by residues 21–28 (GCMFAGKT) and 99–102 (DEIQ). E100 acts as the Proton acceptor in catalysis. C156, C159, C194, and C197 together coordinate Zn(2+).

The protein belongs to the thymidine kinase family. In terms of assembly, homotetramer.

It localises to the cytoplasm. The catalysed reaction is thymidine + ATP = dTMP + ADP + H(+). In Mesoplasma florum (strain ATCC 33453 / NBRC 100688 / NCTC 11704 / L1) (Acholeplasma florum), this protein is Thymidine kinase.